A 493-amino-acid chain; its full sequence is Cytochrome c-552 (493 aa).

An N-terminal signal peptide occupies residues 1 to 25 (MEKKLKSWQGWLLFCGAMAVVFVLG). His116 contacts heme c. Residues Cys144, Cys147, and Lys148 each coordinate heme. Positions 182, 185, 186, 224, 227, and 228 each coordinate heme c. Ca(2+)-binding residues include Glu230, Tyr231, Lys276, and Gln278. Tyr231 contacts substrate. His279 is a substrate binding site. Positions 290, 297, 300, 301, 315, 328, 331, 332, and 407 each coordinate heme c.

The protein belongs to the cytochrome c-552 family. Ca(2+) is required as a cofactor. It depends on heme c as a cofactor.

It localises to the periplasm. The enzyme catalyses 6 Fe(III)-[cytochrome c] + NH4(+) + 2 H2O = 6 Fe(II)-[cytochrome c] + nitrite + 8 H(+). The protein operates within nitrogen metabolism; nitrate reduction (assimilation). Catalyzes the reduction of nitrite to ammonia, consuming six electrons in the process. This is Cytochrome c-552 from Bacteroides fragilis (strain YCH46).